We begin with the raw amino-acid sequence, 136 residues long: Organic hydroperoxide resistance protein OhrB (136 aa).

This sequence belongs to the OsmC/Ohr family.

Involved in organic hydroperoxide resistance. In Bacillus subtilis (strain 168), this protein is Organic hydroperoxide resistance protein OhrB (ohrB).